We begin with the raw amino-acid sequence, 182 residues long: Adenine phosphoribosyltransferase (182 aa).

This sequence belongs to the purine/pyrimidine phosphoribosyltransferase family. In terms of assembly, homodimer.

The protein resides in the cytoplasm. It catalyses the reaction AMP + diphosphate = 5-phospho-alpha-D-ribose 1-diphosphate + adenine. Its pathway is purine metabolism; AMP biosynthesis via salvage pathway; AMP from adenine: step 1/1. In terms of biological role, catalyzes a salvage reaction resulting in the formation of AMP, that is energically less costly than de novo synthesis. This Campylobacter fetus subsp. fetus (strain 82-40) protein is Adenine phosphoribosyltransferase.